We begin with the raw amino-acid sequence, 245 residues long: MRSGVIAQKLGMTRVFNDGGEHVPVTVLKLDGCQVVAHRTKERNGYTALQLGIGRAKVKNVSKAERGRFAIAEVEPKLKLAEFRVEESDLLPVGAEITADHFVVGQFVDVTGTSIGKGFAGPMKRWNFGGLRATHGVSLSHRSHGSTGGRQDPGKTFKNKKMAGHMGAERVTTLNLKVVQLDIERGLILVEGAVPGVAGGWIQVRDAIKRALPKDAPQPGKYRLANSAAPQPAEADAASDTGAQA.

Gln151 is subject to N5-methylglutamine. Positions 214–245 are disordered; that stretch reads KDAPQPGKYRLANSAAPQPAEADAASDTGAQA. Residues 225 to 245 are compositionally biased toward low complexity; that stretch reads ANSAAPQPAEADAASDTGAQA.

This sequence belongs to the universal ribosomal protein uL3 family. Part of the 50S ribosomal subunit. Forms a cluster with proteins L14 and L19. Methylated by PrmB.

Functionally, one of the primary rRNA binding proteins, it binds directly near the 3'-end of the 23S rRNA, where it nucleates assembly of the 50S subunit. The chain is Large ribosomal subunit protein uL3 from Methylocella silvestris (strain DSM 15510 / CIP 108128 / LMG 27833 / NCIMB 13906 / BL2).